The primary structure comprises 225 residues: Large ribosomal subunit protein mL58 (225 aa).

Positions 106 to 138 are disordered; the sequence is PQAPITTPESSSTDAAAADQHGDLPPVLYNPTK. The segment covering 109–119 has biased composition (polar residues); that stretch reads PITTPESSSTD.

The protein belongs to the mitochondrion-specific ribosomal protein mL58 family. As to quaternary structure, component of the mitochondrial large ribosomal subunit (mt-LSU). Mature N.crassa 74S mitochondrial ribosomes consist of a small (37S) and a large (54S) subunit. The 37S small subunit contains a 16S ribosomal RNA (16S mt-rRNA) and 32 different proteins. The 54S large subunit contains a 23S rRNA (23S mt-rRNA) and 42 different proteins.

It localises to the mitochondrion. In terms of biological role, component of the mitochondrial ribosome (mitoribosome), a dedicated translation machinery responsible for the synthesis of mitochondrial genome-encoded proteins, including at least some of the essential transmembrane subunits of the mitochondrial respiratory chain. The mitoribosomes are attached to the mitochondrial inner membrane and translation products are cotranslationally integrated into the membrane. This Neurospora crassa (strain ATCC 24698 / 74-OR23-1A / CBS 708.71 / DSM 1257 / FGSC 987) protein is Large ribosomal subunit protein mL58 (mrpl20).